A 219-amino-acid polypeptide reads, in one-letter code: Large ribosomal subunit protein bL25 (219 aa).

The segment at V176–D219 is disordered. Over residues E184–D219 the composition is skewed to acidic residues.

It belongs to the bacterial ribosomal protein bL25 family. CTC subfamily. Part of the 50S ribosomal subunit; part of the 5S rRNA/L5/L18/L25 subcomplex. Contacts the 5S rRNA. Binds to the 5S rRNA independently of L5 and L18.

This is one of the proteins that binds to the 5S RNA in the ribosome where it forms part of the central protuberance. In Staphylococcus epidermidis (strain ATCC 12228 / FDA PCI 1200), this protein is Large ribosomal subunit protein bL25.